The primary structure comprises 263 residues: Ribosomal RNA small subunit methyltransferase J (263 aa).

S-adenosyl-L-methionine-binding positions include 115-116 (RD), 131-132 (ER), and Asp181.

Belongs to the methyltransferase superfamily. RsmJ family.

It localises to the cytoplasm. It catalyses the reaction guanosine(1516) in 16S rRNA + S-adenosyl-L-methionine = N(2)-methylguanosine(1516) in 16S rRNA + S-adenosyl-L-homocysteine + H(+). Specifically methylates the guanosine in position 1516 of 16S rRNA. The protein is Ribosomal RNA small subunit methyltransferase J of Hahella chejuensis (strain KCTC 2396).